Here is a 689-residue protein sequence, read N- to C-terminus: Glycine--tRNA ligase beta subunit (689 aa).

Belongs to the class-II aminoacyl-tRNA synthetase family. Tetramer of two alpha and two beta subunits.

The protein localises to the cytoplasm. The catalysed reaction is tRNA(Gly) + glycine + ATP = glycyl-tRNA(Gly) + AMP + diphosphate. In Shewanella woodyi (strain ATCC 51908 / MS32), this protein is Glycine--tRNA ligase beta subunit.